An 83-amino-acid chain; its full sequence is Delta-conotoxin-like MVIC (83 aa).

Positions 1–22 (MKLTCVMIVAVLFLTTWTFVTA) are cleaved as a signal peptide. A propeptide spanning residues 23 to 49 (DDSRYGLKNLFPKARHEMKNPEASKLN) is cleaved from the precursor. 3 disulfide bridges follow: cysteine 54-cysteine 69, cysteine 61-cysteine 73, and cysteine 68-cysteine 78. A 4-hydroxyproline mark is found at proline 56 and proline 65.

It belongs to the conotoxin O1 superfamily. As to expression, expressed by the venom duct.

It localises to the secreted. Its function is as follows. Delta-conotoxins bind to site 6 of voltage-gated sodium channels (Nav) and inhibit the inactivation process. The chain is Delta-conotoxin-like MVIC from Conus magus (Magical cone).